The sequence spans 438 residues: Serine hydroxymethyltransferase (438 aa).

(6S)-5,6,7,8-tetrahydrofolate-binding positions include L119 and 123–125 (GHL). N6-(pyridoxal phosphate)lysine is present on K228. Position 370 to 372 (370 to 372 (SPF)) interacts with (6S)-5,6,7,8-tetrahydrofolate.

It belongs to the SHMT family. As to quaternary structure, homodimer. The cofactor is pyridoxal 5'-phosphate.

It is found in the cytoplasm. It catalyses the reaction (6R)-5,10-methylene-5,6,7,8-tetrahydrofolate + glycine + H2O = (6S)-5,6,7,8-tetrahydrofolate + L-serine. It functions in the pathway one-carbon metabolism; tetrahydrofolate interconversion. It participates in amino-acid biosynthesis; glycine biosynthesis; glycine from L-serine: step 1/1. Functionally, catalyzes the reversible interconversion of serine and glycine with tetrahydrofolate (THF) serving as the one-carbon carrier. This reaction serves as the major source of one-carbon groups required for the biosynthesis of purines, thymidylate, methionine, and other important biomolecules. Also exhibits THF-independent aldolase activity toward beta-hydroxyamino acids, producing glycine and aldehydes, via a retro-aldol mechanism. This Pelodictyon phaeoclathratiforme (strain DSM 5477 / BU-1) protein is Serine hydroxymethyltransferase.